Reading from the N-terminus, the 377-residue chain is Carbamoyl phosphate synthase small chain (377 aa).

Residues 1-186 (MSTPALLVLA…LGKGFVTPDE (186 aa)) form a CPSase region. Residues S47, G238, and G240 each contribute to the L-glutamine site. A Glutamine amidotransferase type-1 domain is found at 190–377 (HVVAYDFGVK…IGNMKAAKRA (188 aa)). C266 functions as the Nucleophile in the catalytic mechanism. Positions 267, 270, 308, 310, and 311 each coordinate L-glutamine. Active-site residues include H350 and E352.

The protein belongs to the CarA family. Composed of two chains; the small (or glutamine) chain promotes the hydrolysis of glutamine to ammonia, which is used by the large (or ammonia) chain to synthesize carbamoyl phosphate. Tetramer of heterodimers (alpha,beta)4.

It catalyses the reaction hydrogencarbonate + L-glutamine + 2 ATP + H2O = carbamoyl phosphate + L-glutamate + 2 ADP + phosphate + 2 H(+). It carries out the reaction L-glutamine + H2O = L-glutamate + NH4(+). The protein operates within amino-acid biosynthesis; L-arginine biosynthesis; carbamoyl phosphate from bicarbonate: step 1/1. It participates in pyrimidine metabolism; UMP biosynthesis via de novo pathway; (S)-dihydroorotate from bicarbonate: step 1/3. Its function is as follows. Small subunit of the glutamine-dependent carbamoyl phosphate synthetase (CPSase). CPSase catalyzes the formation of carbamoyl phosphate from the ammonia moiety of glutamine, carbonate, and phosphate donated by ATP, constituting the first step of 2 biosynthetic pathways, one leading to arginine and/or urea and the other to pyrimidine nucleotides. The small subunit (glutamine amidotransferase) binds and cleaves glutamine to supply the large subunit with the substrate ammonia. The polypeptide is Carbamoyl phosphate synthase small chain (Neisseria meningitidis serogroup A / serotype 4A (strain DSM 15465 / Z2491)).